Reading from the N-terminus, the 194-residue chain is Fe/S biogenesis protein NfuA (194 aa).

[4Fe-4S] cluster-binding residues include Cys152 and Cys155.

This sequence belongs to the NfuA family. Homodimer. It depends on [4Fe-4S] cluster as a cofactor.

Involved in iron-sulfur cluster biogenesis. Binds a 4Fe-4S cluster, can transfer this cluster to apoproteins, and thereby intervenes in the maturation of Fe/S proteins. Could also act as a scaffold/chaperone for damaged Fe/S proteins. This is Fe/S biogenesis protein NfuA from Teredinibacter turnerae (strain ATCC 39867 / T7901).